The chain runs to 794 residues: Zinc finger protein 148 (794 aa).

Residue lysine 6 forms a Glycyl lysine isopeptide (Lys-Gly) (interchain with G-Cter in SUMO2) linkage. At serine 51 the chain carries Phosphoserine. Residues lysine 88, lysine 115, and lysine 132 each participate in a glycyl lysine isopeptide (Lys-Gly) (interchain with G-Cter in SUMO2) cross-link. The C2H2-type 1 zinc finger occupies 171–193 (HVCEHCNAAFRTNYHLQRHVFIH). Position 194 is a phosphothreonine (threonine 194). 2 consecutive C2H2-type zinc fingers follow at residues 199 to 221 (FQCS…EKIH) and 227 to 249 (FRCD…KRTH). The residue at position 250 (serine 250) is a Phosphoserine. The segment at 255–278 (YQCEYCLQYFSRTDRVLKHKRMCH) adopts a C2H2-type 4 zinc-finger fold. Lysine 291 participates in a covalent cross-link: Glycyl lysine isopeptide (Lys-Gly) (interchain with G-Cter in SUMO2). Positions 298-336 (EEDSGFSTSPKDNSLPKKKRQKTEKKSSGMDKESALDKS) are disordered. A phosphoserine mark is found at serine 301 and serine 306. Residue lysine 308 forms a Glycyl lysine isopeptide (Lys-Gly) (interchain with G-Cter in SUMO2) linkage. The segment covering 321–336 (EKKSSGMDKESALDKS) has biased composition (basic and acidic residues). Lysine 356 is covalently cross-linked (Glycyl lysine isopeptide (Lys-Gly) (interchain with G-Cter in SUMO1); alternate). Lysine 356 is covalently cross-linked (Glycyl lysine isopeptide (Lys-Gly) (interchain with G-Cter in SUMO2); alternate). Residue lysine 402 forms a Glycyl lysine isopeptide (Lys-Gly) (interchain with G-Cter in SUMO2) linkage. Position 412 is a phosphoserine (serine 412). Residues lysine 421 and lysine 424 each participate in a glycyl lysine isopeptide (Lys-Gly) (interchain with G-Cter in SUMO2) cross-link. A compositionally biased stretch (polar residues) spans 574–588 (NSSEVPEVTPSENVG). The interval 574–596 (NSSEVPEVTPSENVGSSSQASSS) is disordered. An N6-acetyllysine modification is found at lysine 607. A phosphoserine mark is found at serine 665 and serine 784.

The protein belongs to the krueppel C2H2-type zinc-finger protein family. Interacts with HNRNPDL. Interacts with the 5FMC complex; the interaction requires association with CHTOP. Interacts with CAVIN1. In terms of processing, sumoylated with SUMO2. Desumoylated by SENP3, resulting in the stimulation of transcription of its target genes.

The protein resides in the nucleus. Its function is as follows. Involved in transcriptional regulation. Represses the transcription of a number of genes including gastrin, stromelysin and enolase. Binds to the G-rich box in the enhancer region of these genes. This chain is Zinc finger protein 148 (ZNF148), found in Homo sapiens (Human).